Consider the following 395-residue polypeptide: Argininosuccinate synthase (395 aa).

8–16 lines the ATP pocket; sequence AYSGGLDTS. Tyrosine 86 contributes to the L-citrulline binding site. Glycine 116 is an ATP binding site. Residues threonine 118, asparagine 122, and aspartate 123 each coordinate L-aspartate. Residue asparagine 122 coordinates L-citrulline. The L-citrulline site is built by arginine 126, serine 173, serine 182, glutamate 257, and tyrosine 269.

Belongs to the argininosuccinate synthase family. Type 1 subfamily. In terms of assembly, homotetramer.

The protein localises to the cytoplasm. The enzyme catalyses L-citrulline + L-aspartate + ATP = 2-(N(omega)-L-arginino)succinate + AMP + diphosphate + H(+). It participates in amino-acid biosynthesis; L-arginine biosynthesis; L-arginine from L-ornithine and carbamoyl phosphate: step 2/3. This is Argininosuccinate synthase from Methanocaldococcus jannaschii (strain ATCC 43067 / DSM 2661 / JAL-1 / JCM 10045 / NBRC 100440) (Methanococcus jannaschii).